A 1056-amino-acid polypeptide reads, in one-letter code: Carbamoyl phosphate synthase large chain (1056 aa).

A carboxyphosphate synthetic domain region spans residues 1-398 (MPRDPSIKKV…AFLKALRSLD (398 aa)). Residues R127, R167, G173, G174, E206, V208, E213, G239, V240, H241, Q282, and E295 each contribute to the ATP site. The ATP-grasp 1 domain occupies 131–324 (RDLMNRIGEP…IARVASKIAI (194 aa)). The Mg(2+) site is built by Q282, E295, and N297. Residues Q282, E295, and N297 each contribute to the Mn(2+) site. Positions 399 to 532 (TDVEHHTVLS…STYGDKVCEV (134 aa)) are oligomerization domain. The segment at 533–921 (THSDRKKVMI…YKASIAAHNR (389 aa)) is carbamoyl phosphate synthetic domain. The 192-residue stretch at 663 to 854 (SVLLDSLSIP…LAKIAARVMM (192 aa)) folds into the ATP-grasp 2 domain. Positions 699, 738, 740, 745, 770, 771, 772, 773, 813, and 825 each coordinate ATP. Residues Q813, E825, and N827 each coordinate Mg(2+). 3 residues coordinate Mn(2+): Q813, E825, and N827. The region spanning 920–1056 (NRLPKSGNVF…IEPLQHYIGR (137 aa)) is the MGS-like domain. The segment at 922–1056 (LPKSGNVFIS…IEPLQHYIGR (135 aa)) is allosteric domain.

It belongs to the CarB family. Composed of two chains; the small (or glutamine) chain promotes the hydrolysis of glutamine to ammonia, which is used by the large (or ammonia) chain to synthesize carbamoyl phosphate. Tetramer of heterodimers (alpha,beta)4. Mg(2+) serves as cofactor. It depends on Mn(2+) as a cofactor.

The catalysed reaction is hydrogencarbonate + L-glutamine + 2 ATP + H2O = carbamoyl phosphate + L-glutamate + 2 ADP + phosphate + 2 H(+). The enzyme catalyses hydrogencarbonate + NH4(+) + 2 ATP = carbamoyl phosphate + 2 ADP + phosphate + 2 H(+). Its pathway is amino-acid biosynthesis; L-arginine biosynthesis; carbamoyl phosphate from bicarbonate: step 1/1. It functions in the pathway pyrimidine metabolism; UMP biosynthesis via de novo pathway; (S)-dihydroorotate from bicarbonate: step 1/3. Large subunit of the glutamine-dependent carbamoyl phosphate synthetase (CPSase). CPSase catalyzes the formation of carbamoyl phosphate from the ammonia moiety of glutamine, carbonate, and phosphate donated by ATP, constituting the first step of 2 biosynthetic pathways, one leading to arginine and/or urea and the other to pyrimidine nucleotides. The large subunit (synthetase) binds the substrates ammonia (free or transferred from glutamine from the small subunit), hydrogencarbonate and ATP and carries out an ATP-coupled ligase reaction, activating hydrogencarbonate by forming carboxy phosphate which reacts with ammonia to form carbamoyl phosphate. This is Carbamoyl phosphate synthase large chain from Methanospirillum hungatei JF-1 (strain ATCC 27890 / DSM 864 / NBRC 100397 / JF-1).